Here is a 226-residue protein sequence, read N- to C-terminus: ATP synthase subunit a (226 aa).

6 consecutive transmembrane segments (helical) span residues 18-38 (FITG…SLGA), 79-99 (LAGT…IPGF), 105-125 (SWSF…FEGI), 134-154 (FAHF…IEII), 179-199 (LIML…VLFF), and 201-221 (GILQ…GAVL).

It belongs to the ATPase A chain family. As to quaternary structure, F-type ATPases have 2 components, CF(1) - the catalytic core - and CF(0) - the membrane proton channel. CF(1) has five subunits: alpha(3), beta(3), gamma(1), delta(1), epsilon(1). CF(0) has three main subunits: a(1), b(2) and c(9-12). The alpha and beta chains form an alternating ring which encloses part of the gamma chain. CF(1) is attached to CF(0) by a central stalk formed by the gamma and epsilon chains, while a peripheral stalk is formed by the delta and b chains.

The protein localises to the cell inner membrane. Key component of the proton channel; it plays a direct role in the translocation of protons across the membrane. The protein is ATP synthase subunit a of Helicobacter pylori (strain J99 / ATCC 700824) (Campylobacter pylori J99).